Consider the following 429-residue polypeptide: ETS domain-containing protein Elk-1 (429 aa).

Positions 5–86 (VTLWQFLLQL…SGQKFVYKFV (82 aa)) form a DNA-binding region, ETS. Disordered regions lie at residues 119–146 (HAGP…GLAR), 165–204 (SLQP…SPNP), and 227–253 (APNQ…KVEG). Over residues 169–178 (QPQPPIPPRP) the composition is skewed to pro residues. Residues Lys-231, Lys-250, and Lys-255 each participate in a glycyl lysine isopeptide (Lys-Gly) (interchain with G-Cter in SUMO) cross-link. Positions 302-312 (STSTTEITQPQ) are enriched in polar residues. Positions 302-354 (STSTTEITQPQKGRKPRDLELPLSPSLLGGQGPERTPGSGTSSGLQAPGPALT) are disordered. Ser-325 carries the post-translational modification Phosphoserine; by MAPK1. Phosphothreonine; by MAPK1 occurs at positions 337, 354, 364, and 369. The segment at 350–400 (GPALTPSLLPTHTLTPVLLTPSSLPPSIHFWSTLSPIAPRSPAKLSFQFPS) is sufficient for interaction with MAD2L2. Residue Thr-382 is glycosylated (O-linked (GlcNAc) threonine). Ser-384 carries the post-translational modification Phosphoserine; by MAPK1 and MAPK8. At Ser-390 the chain carries Phosphoserine; by MAPK1. Phosphothreonine; by MAPK1 is present on Thr-418. Ser-423 carries the phosphoserine; by MAPK1 modification.

Belongs to the ETS family. Interacts in its sumoylated form with PIAS2/PIASX which enhances its transcriptional activator activity. Interacts with MAD2L2; the interaction is direct and promotes phosphorylation by the kinases MAPK8 and/or MAPK9. Interacts with POU1F1. Sumoylation represses transcriptional activator activity as it results in recruitment of HDAC2 to target gene promoters which leads to decreased histone acetylation and reduced transactivator activity. It also regulates nuclear retention. In terms of processing, on mitogenic stimulation, phosphorylated on C-terminal serine and threonine residues by MAPK1 but also MAPK8 and/or MAPK9. Phosphorylation leads to loss of sumoylation and restores transcriptional activator activity. Phosphorylated and activated by CaMK4, MAPK11, MAPK12 and MAPK14. Upon bFGF stimulus, phosphorylated by PAK1. Phosphorylated by PRP4K at Thr-418; phosphorylation activation ELK1 transcriptional activity. In terms of tissue distribution, predominantly expressed in the brain, and to a lesser extent in the heart, liver and muscle.

The protein resides in the nucleus. Its function is as follows. Transcription factor that binds to purine-rich DNA sequences. Forms a ternary complex with SRF and the ETS and SRF motifs of the serum response element (SRE) on the promoter region of immediate early genes such as FOS and IER2. Induces target gene transcription upon JNK and MAPK-signaling pathways stimulation. The polypeptide is ETS domain-containing protein Elk-1 (Mus musculus (Mouse)).